Reading from the N-terminus, the 779-residue chain is Endonuclease MutS2 (779 aa).

An ATP-binding site is contributed by Gly-328–Thr-335. The region spanning Leu-704–Gly-779 is the Smr domain.

It belongs to the DNA mismatch repair MutS family. MutS2 subfamily. In terms of assembly, homodimer. Binds to stalled ribosomes, contacting rRNA.

In terms of biological role, endonuclease that is involved in the suppression of homologous recombination and thus may have a key role in the control of bacterial genetic diversity. Acts as a ribosome collision sensor, splitting the ribosome into its 2 subunits. Detects stalled/collided 70S ribosomes which it binds and splits by an ATP-hydrolysis driven conformational change. Acts upstream of the ribosome quality control system (RQC), a ribosome-associated complex that mediates the extraction of incompletely synthesized nascent chains from stalled ribosomes and their subsequent degradation. Probably generates substrates for RQC. This Streptococcus agalactiae serotype III (strain NEM316) protein is Endonuclease MutS2.